The primary structure comprises 529 residues: Zinc finger CCCH domain-containing protein 65 (529 aa).

Over residues 1-10 (MADADARAPP) the composition is skewed to basic and acidic residues. Disordered stretches follow at residues 1–36 (MADADARAPPKSDPGATPIGSISPSSAAPAAGEDEV) and 134–179 (PARK…GSYV). Residues 14-31 (PGATPIGSISPSSAAPAA) show a composition bias toward low complexity. 3 C3H1-type zinc fingers span residues 108–136 (RPGEPDCTYYVKFGSCRFGMKCKFNHPAR), 237–265 (GSSQEECKYYSTPGGCKFGKACKYLHRDG), and 285–313 (RPGEKECPYYMRTGSCKYATNCKFHHPDP). A disordered region spans residues 313-347 (PSNVASKDPQLEHENGDAPQQDVQGSSSQPNASIW). Residues 333 to 344 (QDVQGSSSQPNA) show a composition bias toward polar residues. C3H1-type zinc fingers lie at residues 433–461 (RPGQPECQHFVKSGFCKFRMKCKYHHPRS) and 477–505 (KPDQPVCTYYGRYGVCKFGPACAYNHPFN).

In Oryza sativa subsp. japonica (Rice), this protein is Zinc finger CCCH domain-containing protein 65.